The primary structure comprises 541 residues: uncharacterized protein (541 aa).

The tat-type signal signal peptide spans 1 to 55 (MTKTVTRAGGASGPQQFQSGGETMKYEITRRRFLAASSAVLAAPAIVTMVRPARA). The disordered stretch occupies residues 339-362 (RRSPSGISSPRSNRQPKAEALSAR). Residues 341 to 351 (SPSGISSPRSN) are compositionally biased toward low complexity. The next 4 helical transmembrane spans lie at 379–399 (AIVW…MVFM), 420–440 (LPVL…AHSG), 466–486 (LVSA…GEIA), and 500–520 (VGYF…LAVA).

It belongs to the bacterial solute-binding protein 7 family. Post-translationally, predicted to be exported by the Tat system. The position of the signal peptide cleavage has not been experimentally proven.

It is found in the cell membrane. This is an uncharacterized protein from Sinorhizobium fredii (strain NBRC 101917 / NGR234).